The chain runs to 153 residues: Nucleoside diphosphate kinase (153 aa).

Residues Lys9, Phe57, Arg85, Thr91, Arg102, and Asn112 each contribute to the ATP site. Catalysis depends on His115, which acts as the Pros-phosphohistidine intermediate.

The protein belongs to the NDK family. In terms of assembly, homotetramer. Mg(2+) is required as a cofactor.

Its subcellular location is the cytoplasm. The enzyme catalyses a 2'-deoxyribonucleoside 5'-diphosphate + ATP = a 2'-deoxyribonucleoside 5'-triphosphate + ADP. It catalyses the reaction a ribonucleoside 5'-diphosphate + ATP = a ribonucleoside 5'-triphosphate + ADP. Major role in the synthesis of nucleoside triphosphates other than ATP. The ATP gamma phosphate is transferred to the NDP beta phosphate via a ping-pong mechanism, using a phosphorylated active-site intermediate. The sequence is that of Nucleoside diphosphate kinase from Parabacteroides distasonis (strain ATCC 8503 / DSM 20701 / CIP 104284 / JCM 5825 / NCTC 11152).